Reading from the N-terminus, the 338-residue chain is 1-aminocyclopropane-1-carboxylate deaminase (338 aa).

Lysine 51 carries the post-translational modification N6-(pyridoxal phosphate)lysine. The Nucleophile role is filled by serine 78.

Belongs to the ACC deaminase/D-cysteine desulfhydrase family. In terms of assembly, homotrimer. Requires pyridoxal 5'-phosphate as cofactor.

It catalyses the reaction 1-aminocyclopropane-1-carboxylate + H2O = 2-oxobutanoate + NH4(+). Functionally, catalyzes a cyclopropane ring-opening reaction, the irreversible conversion of 1-aminocyclopropane-1-carboxylate (ACC) to ammonia and alpha-ketobutyrate. Allows growth on ACC as a nitrogen source. In Burkholderia cenocepacia (strain HI2424), this protein is 1-aminocyclopropane-1-carboxylate deaminase.